A 182-amino-acid polypeptide reads, in one-letter code: Large ribosomal subunit protein uL5 (182 aa).

It belongs to the universal ribosomal protein uL5 family. As to quaternary structure, part of the 50S ribosomal subunit; part of the 5S rRNA/L5/L18/L25 subcomplex. Contacts the 5S rRNA and the P site tRNA. Forms a bridge to the 30S subunit in the 70S ribosome.

Functionally, this is one of the proteins that bind and probably mediate the attachment of the 5S RNA into the large ribosomal subunit, where it forms part of the central protuberance. In the 70S ribosome it contacts protein S13 of the 30S subunit (bridge B1b), connecting the 2 subunits; this bridge is implicated in subunit movement. Contacts the P site tRNA; the 5S rRNA and some of its associated proteins might help stabilize positioning of ribosome-bound tRNAs. This chain is Large ribosomal subunit protein uL5, found in Thermus aquaticus.